Reading from the N-terminus, the 253-residue chain is CENP-A recruiting complex protein mis20 (253 aa).

Residues 113 to 136 (TGPTTSKNKHPSHSNTIRSPPYKV) form a disordered region.

Component of the CENP-A recruiting complex composed of at least mis16, mis19, mis19 and mis20.

The protein localises to the cytoplasm. It is found in the cytoskeleton. It localises to the microtubule organizing center. The protein resides in the spindle pole body. Its subcellular location is the chromosome. The protein localises to the centromere. Functionally, component of the CENP-A recruiting complex that ensures the integrity of mitotic spindles through maintenance of kinetochore factors mis6/CENP-I and cnp1/CENP-A. Seems dispensable for proper chromosome segregation. This is CENP-A recruiting complex protein mis20 from Schizosaccharomyces pombe (strain 972 / ATCC 24843) (Fission yeast).